The sequence spans 308 residues: Very-long-chain enoyl-CoA reductase (308 aa).

The Cytoplasmic segment spans residues 1–86; sequence MKHYEVEIRD…YFRDLGAQIS (86 aa). Lys22 is subject to N6-acetyllysine. At Ser58 the chain carries Phosphoserine. Lys60 bears the N6-acetyllysine mark. Residues 87 to 106 traverse the membrane as a helical segment; that stretch reads WVTVFLTEYAGPLFIYLLFY. Topologically, residues 107–124 are lumenal; it reads FRVPFIYGRKYDFTSSRH. Residues 125–147 form a helical membrane-spanning segment; it reads TVVHLACMCHSFHYIKRLLETLF. Residues 148–158 are Cytoplasmic-facing; that stretch reads VHRFSHGTMPL. The helical transmembrane segment at 159 to 180 threads the bilayer; sequence RNIFKNCTYYWGFAAWMAYYIN. At 181 to 189 the chain is on the lumenal side; it reads HPLYTPPTY. A helical transmembrane segment spans residues 190-216; it reads GVQQVKLALAIFVICQLGNFSIHMALR. Topologically, residues 217-245 are cytoplasmic; the sequence is DLRPAGSKTRKIPYPTKNPFTWLFLLVSC. Residues 246-262 traverse the membrane as a helical segment; the sequence is PNYTYEVGSWIGFAIMT. At 263–264 the chain is on the lumenal side; the sequence is QC. A helical membrane pass occupies residues 265–292; that stretch reads VPVALFSLVGFTQMTIWAKGKHRSYLKE. The Cytoplasmic portion of the chain corresponds to 293–308; sequence FRDYPPLRMPIIPFLL.

This sequence belongs to the steroid 5-alpha reductase family. As to quaternary structure, interacts with ELOVL1 and LASS2. Post-translationally, glycosylated. In terms of tissue distribution, expressed at high levels in brain and is also found at lower levels in several other tissues.

The protein resides in the endoplasmic reticulum membrane. The enzyme catalyses a very-long-chain 2,3-saturated fatty acyl-CoA + NADP(+) = a very-long-chain (2E)-enoyl-CoA + NADPH + H(+). The catalysed reaction is octadecanoyl-CoA + NADP(+) = (2E)-octadecenoyl-CoA + NADPH + H(+). It catalyses the reaction (2E,7Z,10Z,13Z,16Z)-docosapentaenoyl-CoA + NADPH + H(+) = (7Z,10Z,13Z,16Z)-docosatetraenoyl-CoA + NADP(+). It carries out the reaction (2E,7Z,10Z,13Z,16Z,19Z)-docosahexaenoyl-CoA + NADPH + H(+) = (7Z,10Z,13Z,16Z,19Z)-docosapentaenoyl-CoA + NADP(+). The enzyme catalyses (2E,8Z,11Z,14Z)-eicosatetraenoyl-CoA + NADPH + H(+) = (8Z,11Z,14Z)-eicosatrienoyl-CoA + NADP(+). The catalysed reaction is (2E)-hexadecenoyl-CoA + NADPH + H(+) = hexadecanoyl-CoA + NADP(+). The protein operates within lipid metabolism; fatty acid biosynthesis. Its pathway is lipid metabolism; sphingolipid metabolism. Functionally, involved in both the production of very long-chain fatty acids for sphingolipid synthesis and the degradation of the sphingosine moiety in sphingolipids through the sphingosine 1-phosphate metabolic pathway. Catalyzes the last of the four reactions of the long-chain fatty acids elongation cycle. This endoplasmic reticulum-bound enzymatic process, allows the addition of 2 carbons to the chain of long- and very long-chain fatty acids/VLCFAs per cycle. This enzyme reduces the trans-2,3-enoyl-CoA fatty acid intermediate to an acyl-CoA that can be further elongated by entering a new cycle of elongation. Thereby, it participates in the production of VLCFAs of different chain lengths that are involved in multiple biological processes as precursors of membrane lipids and lipid mediators. Catalyzes the saturation step of the sphingosine 1-phosphate metabolic pathway, the conversion of trans-2-hexadecenoyl-CoA to palmitoyl-CoA. The sequence is that of Very-long-chain enoyl-CoA reductase (Tecr) from Rattus norvegicus (Rat).